Here is a 295-residue protein sequence, read N- to C-terminus: Ethanolamine ammonia-lyase small subunit (295 aa).

3 residues coordinate adenosylcob(III)alamin: Val207, Glu228, and Cys258.

The protein belongs to the EutC family. As to quaternary structure, the basic unit is a heterodimer which dimerizes to form tetramers. The heterotetramers trimerize; 6 large subunits form a core ring with 6 small subunits projecting outwards. The cofactor is adenosylcob(III)alamin.

It is found in the bacterial microcompartment. The enzyme catalyses ethanolamine = acetaldehyde + NH4(+). Its pathway is amine and polyamine degradation; ethanolamine degradation. Catalyzes the deamination of various vicinal amino-alcohols to oxo compounds. Allows this organism to utilize ethanolamine as the sole source of nitrogen and carbon in the presence of external vitamin B12. The chain is Ethanolamine ammonia-lyase small subunit from Escherichia coli O157:H7.